The primary structure comprises 351 residues: Anthranilate phosphoribosyltransferase (351 aa).

Residues Gly-80, 83 to 84, Thr-88, 90 to 93, 108 to 116, and Ser-120 each bind 5-phospho-alpha-D-ribose 1-diphosphate; these read GD, NVST, and KHGNRSVTS. Gly-80 is an anthranilate binding site. Mg(2+) is bound at residue Ser-92. Asn-111 contacts anthranilate. Arg-166 lines the anthranilate pocket. Residues Asp-229 and Glu-230 each contribute to the Mg(2+) site.

It belongs to the anthranilate phosphoribosyltransferase family. Homodimer. The cofactor is Mg(2+).

It carries out the reaction N-(5-phospho-beta-D-ribosyl)anthranilate + diphosphate = 5-phospho-alpha-D-ribose 1-diphosphate + anthranilate. It participates in amino-acid biosynthesis; L-tryptophan biosynthesis; L-tryptophan from chorismate: step 2/5. Its function is as follows. Catalyzes the transfer of the phosphoribosyl group of 5-phosphorylribose-1-pyrophosphate (PRPP) to anthranilate to yield N-(5'-phosphoribosyl)-anthranilate (PRA). The protein is Anthranilate phosphoribosyltransferase of Prosthecochloris aestuarii (strain DSM 271 / SK 413).